The following is a 559-amino-acid chain: Excitatory amino acid transporter 5 (559 aa).

Topologically, residues methionine 1–histidine 16 are cytoplasmic. A run of 3 helical transmembrane segments spans residues asparagine 17–leucine 37, methionine 60–leucine 80, and alanine 94–isoleucine 114. The Extracellular portion of the chain corresponds to histidine 115 to threonine 215. Asparagine 190 is a glycosylation site (N-linked (GlcNAc...) asparagine). A helical membrane pass occupies residues serine 216 to glycine 236. Asparagine 253 carries an N-linked (GlcNAc...) asparagine glycan. Transmembrane regions (helical) follow at residues isoleucine 259–isoleucine 279, threonine 298–isoleucine 318, glycine 329–isoleucine 349, valine 371–isoleucine 391, alanine 413–leucine 433, and phenylalanine 456–cysteine 476.

The protein belongs to the dicarboxylate/amino acid:cation symporter (DAACS) (TC 2.A.23) family. SLC1A7 subfamily. Interacts with the PDZ domains of DLG4. In terms of tissue distribution, expressed in retina, located in both cone and rod photoreceptor terminals and in axon terminals of rod bipolar cells.

The protein localises to the photoreceptor inner segment membrane. It localises to the synaptic cell membrane. The catalysed reaction is K(+)(in) + L-glutamate(out) + 3 Na(+)(out) + H(+)(out) = K(+)(out) + L-glutamate(in) + 3 Na(+)(in) + H(+)(in). It catalyses the reaction K(+)(in) + L-aspartate(out) + 3 Na(+)(out) + H(+)(out) = K(+)(out) + L-aspartate(in) + 3 Na(+)(in) + H(+)(in). It carries out the reaction D-aspartate(out) + K(+)(in) + 3 Na(+)(out) + H(+)(out) = D-aspartate(in) + K(+)(out) + 3 Na(+)(in) + H(+)(in). In terms of biological role, sodium-dependent, high-affinity amino acid transporter that mediates the uptake of L-glutamate and also L-aspartate and D-aspartate. Functions as a symporter that transports one amino acid molecule together with two or three Na(+) ions and one proton, in parallel with the counter-transport of one K(+) ion. Acts primarily as an inhibitory glutamate-gated chloride channel being a major inhibitory presynaptic receptor at mammalian rod bipolar cell axon terminals. Glutamate binding gates a large Cl(-) conductance that mediates inhibition, affecting visual processing in the retina. The polypeptide is Excitatory amino acid transporter 5 (Mus musculus (Mouse)).